A 238-amino-acid polypeptide reads, in one-letter code: CD63 antigen (238 aa).

Residues 2–11 are Cytoplasmic-facing; that stretch reads AVEGGMKCVK. A helical membrane pass occupies residues 12-32; sequence FLLYVLLLAFCACAVGLIAVG. Residues 33–51 are Extracellular-facing; the sequence is VGAQLVLSQTIIQGATPGS. Residues 52-72 traverse the membrane as a helical segment; sequence LLPVVIIAVGVFLFLVAFVGC. Residues 73-81 are Cytoplasmic-facing; that stretch reads CGACKENYC. A helical transmembrane segment spans residues 82-102; that stretch reads LMITFAIFLSLIMLVEVAAAI. At 103–203 the chain is on the extracellular side; it reads AGYVFRDKVM…KIGGWLRKNV (101 aa). N130, N150, and N172 each carry an N-linked (GlcNAc...) asparagine glycan. A helical membrane pass occupies residues 204 to 224; the sequence is LVVAAAALGIAFVEVLGIVFA. The Cytoplasmic portion of the chain corresponds to 225–238; that stretch reads CCLVKSIRSGYEVM. Positions 234-238 match the Lysosomal targeting motif motif; that stretch reads GYEVM.

The protein belongs to the tetraspanin (TM4SF) family. Interacts with TIMP1 and ITGB1 and recruits TIMP1 to ITGB1. Interacts with CD9. Identified in a complex with CD9 and ITGB3. Interacts with PMEL. Interacts with KDR/VEGFR2; identified in a complex with ITGB1 and KDR/VEGFR2 and is required to recruit KDR to ITGB1 complexes. Interacts with SYT7. In terms of processing, palmitoylated at a low, basal level in unstimulated platelets. The level of palmitoylation increases when platelets are activated by thrombin (in vitro). In terms of tissue distribution, detected in platelets (at protein level). Dysplastic nevi, radial growth phase primary melanomas, hematopoietic cells, tissue macrophages.

It localises to the cell membrane. The protein localises to the lysosome membrane. Its subcellular location is the late endosome membrane. The protein resides in the endosome. It is found in the multivesicular body. It localises to the melanosome. The protein localises to the secreted. Its subcellular location is the extracellular exosome. The protein resides in the cell surface. Functionally, functions as a cell surface receptor for TIMP1 and plays a role in the activation of cellular signaling cascades. Plays a role in the activation of ITGB1 and integrin signaling, leading to the activation of AKT, FAK/PTK2 and MAP kinases. Promotes cell survival, reorganization of the actin cytoskeleton, cell adhesion, spreading and migration, via its role in the activation of AKT and FAK/PTK2. Plays a role in VEGFA signaling via its role in regulating the internalization of KDR/VEGFR2. Plays a role in intracellular vesicular transport processes, and is required for normal trafficking of the PMEL luminal domain that is essential for the development and maturation of melanocytes. Plays a role in the adhesion of leukocytes onto endothelial cells via its role in the regulation of SELP trafficking. May play a role in mast cell degranulation in response to Ms4a2/FceRI stimulation, but not in mast cell degranulation in response to other stimuli. The sequence is that of CD63 antigen (CD63) from Homo sapiens (Human).